The following is an 877-amino-acid chain: DNA mismatch repair protein MutS (877 aa).

627–634 (GPNMAGKS) provides a ligand contact to ATP.

Belongs to the DNA mismatch repair MutS family.

This protein is involved in the repair of mismatches in DNA. It is possible that it carries out the mismatch recognition step. This protein has a weak ATPase activity. The chain is DNA mismatch repair protein MutS from Dinoroseobacter shibae (strain DSM 16493 / NCIMB 14021 / DFL 12).